Reading from the N-terminus, the 118-residue chain is MPTKIEARLKRKNRIRKKLSGTTERPRLTVYKSLKHIYAQVVDDTTGKTLAFASSLSKDLKGQDEGDKKADAKRVGALIAQKCKAANVEAVVFDRNGFPYHGRIAAVADAAREAGLKF.

The protein belongs to the universal ribosomal protein uL18 family. As to quaternary structure, part of the 50S ribosomal subunit; part of the 5S rRNA/L5/L18/L25 subcomplex. Contacts the 5S and 23S rRNAs.

This is one of the proteins that bind and probably mediate the attachment of the 5S RNA into the large ribosomal subunit, where it forms part of the central protuberance. In Myxococcus xanthus (strain DK1622), this protein is Large ribosomal subunit protein uL18.